The primary structure comprises 146 residues: Hemoglobin subunit beta (146 aa).

Val-1 is subject to N-acetylvaline. One can recognise a Globin domain in the interval 2 to 146 (HLTADEKSAV…VATALGHKYH (145 aa)). A Phosphothreonine modification is found at Thr-12. Ser-44 is subject to Phosphoserine. Lys-59 bears the N6-acetyllysine mark. His-63 contributes to the heme b binding site. Lys-82 carries the post-translational modification N6-acetyllysine. Residue His-92 participates in heme b binding. At Cys-93 the chain carries S-nitrosocysteine. Residue Lys-144 is modified to N6-acetyllysine.

Belongs to the globin family. Heterotetramer of two alpha chains and two beta chains. Red blood cells.

Functionally, involved in oxygen transport from the lung to the various peripheral tissues. The sequence is that of Hemoglobin subunit beta (HBB) from Antrozous pallidus (Pallid bat).